Here is a 682-residue protein sequence, read N- to C-terminus: DNA-directed RNA polymerase subunit beta' (682 aa).

The Zn(2+) site is built by cysteine 69, cysteine 71, cysteine 87, and cysteine 90. Mg(2+) is bound by residues aspartate 489, aspartate 491, and aspartate 493.

It belongs to the RNA polymerase beta' chain family. RpoC1 subfamily. As to quaternary structure, in plastids the minimal PEP RNA polymerase catalytic core is composed of four subunits: alpha, beta, beta', and beta''. When a (nuclear-encoded) sigma factor is associated with the core the holoenzyme is formed, which can initiate transcription. It depends on Mg(2+) as a cofactor. Zn(2+) is required as a cofactor.

The protein localises to the plastid. Its subcellular location is the chloroplast. It carries out the reaction RNA(n) + a ribonucleoside 5'-triphosphate = RNA(n+1) + diphosphate. Functionally, DNA-dependent RNA polymerase catalyzes the transcription of DNA into RNA using the four ribonucleoside triphosphates as substrates. In Platanus occidentalis (Sycamore), this protein is DNA-directed RNA polymerase subunit beta'.